The sequence spans 101 residues: Large ribosomal subunit protein uL23 (101 aa).

This sequence belongs to the universal ribosomal protein uL23 family. Part of the 50S ribosomal subunit. Contacts protein L29, and trigger factor when it is bound to the ribosome.

Its function is as follows. One of the early assembly proteins it binds 23S rRNA. One of the proteins that surrounds the polypeptide exit tunnel on the outside of the ribosome. Forms the main docking site for trigger factor binding to the ribosome. In Kocuria rhizophila (strain ATCC 9341 / DSM 348 / NBRC 103217 / DC2201), this protein is Large ribosomal subunit protein uL23.